The following is a 174-amino-acid chain: Inactive protein RESTRICTED TEV MOVEMENT 1 (174 aa).

In terms of domain architecture, Jacalin-type lectin spans 1 to 152 (MKIGPVGKHD…LQYIGVYLRP (152 aa)).

Belongs to the jacalin lectin family. As to quaternary structure, self-interacts. Interacts with RTM3.

The protein localises to the cytoplasm. Functionally, unable to mediate restriction of long-distance movement of the pathogenic tobacco etch virus (TEV) without causing a hypersensitive response or inducing systemic acquired resistance. The polypeptide is Inactive protein RESTRICTED TEV MOVEMENT 1 (RTM1) (Arabidopsis thaliana (Mouse-ear cress)).